Reading from the N-terminus, the 625-residue chain is Threonine--tRNA ligase (625 aa).

The segment at 1 to 147 (MRILLIHSDY…TIVPGEAKKE (147 aa)) is editing domain. Residues 206 to 505 (PHVKIMLEQE…MKKGKKPMYP (300 aa)) are catalytic. Zn(2+)-binding residues include Cys298, His350, and His474.

The protein belongs to the class-II aminoacyl-tRNA synthetase family. In terms of assembly, homodimer. Zn(2+) serves as cofactor.

The protein resides in the cytoplasm. The catalysed reaction is tRNA(Thr) + L-threonine + ATP = L-threonyl-tRNA(Thr) + AMP + diphosphate + H(+). Its function is as follows. Catalyzes the attachment of threonine to tRNA(Thr) in a two-step reaction: L-threonine is first activated by ATP to form Thr-AMP and then transferred to the acceptor end of tRNA(Thr). Also edits incorrectly charged L-seryl-tRNA(Thr). In Thermococcus sibiricus (strain DSM 12597 / MM 739), this protein is Threonine--tRNA ligase.